The primary structure comprises 143 residues: Phosphatidylethanolamine-binding protein homolog R644 (143 aa).

This sequence belongs to the phosphatidylethanolamine-binding protein family.

The protein resides in the virion. This is Phosphatidylethanolamine-binding protein homolog R644 from Acanthamoeba polyphaga mimivirus (APMV).